The chain runs to 251 residues: Hydroxyacylglutathione hydrolase (251 aa).

7 residues coordinate Zn(2+): His53, His55, Asp57, His58, His110, Asp127, and His165.

Belongs to the metallo-beta-lactamase superfamily. Glyoxalase II family. In terms of assembly, monomer. It depends on Zn(2+) as a cofactor.

The enzyme catalyses an S-(2-hydroxyacyl)glutathione + H2O = a 2-hydroxy carboxylate + glutathione + H(+). The protein operates within secondary metabolite metabolism; methylglyoxal degradation; (R)-lactate from methylglyoxal: step 2/2. Its function is as follows. Thiolesterase that catalyzes the hydrolysis of S-D-lactoyl-glutathione to form glutathione and D-lactic acid. The sequence is that of Hydroxyacylglutathione hydrolase from Enterobacter sp. (strain 638).